We begin with the raw amino-acid sequence, 314 residues long: Ribosomal protein uL3 glutamine methyltransferase (314 aa).

This sequence belongs to the protein N5-glutamine methyltransferase family. PrmB subfamily.

The enzyme catalyses L-glutaminyl-[ribosomal protein uL3] + S-adenosyl-L-methionine = N(5)-methyl-L-glutaminyl-[ribosomal protein uL3] + S-adenosyl-L-homocysteine + H(+). Its function is as follows. Methylates large ribosomal subunit protein uL3 on a specific glutamine residue. The chain is Ribosomal protein uL3 glutamine methyltransferase from Haemophilus influenzae (strain ATCC 51907 / DSM 11121 / KW20 / Rd).